Here is a 167-residue protein sequence, read N- to C-terminus: Pathogenesis-related protein PR-1 type (167 aa).

The signal sequence occupies residues 1-29; it reads MAHNHWCNLFSVALVCVVALVMVQYSVAQ. An SCP domain is found at 36 to 155; it reads VDAHNAARSA…NGAWFITCNY (120 aa). Cystine bridges form between Cys72-Cys144, Cys117-Cys123, and Cys139-Cys153.

Belongs to the CRISP family.

Functionally, probably involved in the defense reaction of plants against pathogens. This is Pathogenesis-related protein PR-1 type from Sambucus nigra (European elder).